We begin with the raw amino-acid sequence, 417 residues long: UDP-N-acetylglucosamine 1-carboxyvinyltransferase (417 aa).

A phosphoenolpyruvate-binding site is contributed by 22-23 (KN). Residue Arg-92 participates in UDP-N-acetyl-alpha-D-glucosamine binding. The active-site Proton donor is the Cys-116. At Cys-116 the chain carries 2-(S-cysteinyl)pyruvic acid O-phosphothioketal. 2 residues coordinate UDP-N-acetyl-alpha-D-glucosamine: Asp-304 and Ile-326.

Belongs to the EPSP synthase family. MurA subfamily.

The protein localises to the cytoplasm. It carries out the reaction phosphoenolpyruvate + UDP-N-acetyl-alpha-D-glucosamine = UDP-N-acetyl-3-O-(1-carboxyvinyl)-alpha-D-glucosamine + phosphate. The protein operates within cell wall biogenesis; peptidoglycan biosynthesis. Cell wall formation. Adds enolpyruvyl to UDP-N-acetylglucosamine. The protein is UDP-N-acetylglucosamine 1-carboxyvinyltransferase of Geobacter metallireducens (strain ATCC 53774 / DSM 7210 / GS-15).